The primary structure comprises 384 residues: tRNA-specific 2-thiouridylase MnmA (384 aa).

Residues 21–28 and M47 each bind ATP; that span reads GMSGGVDS. The segment at 107–109 is interaction with target base in tRNA; it reads NPD. C112 serves as the catalytic Nucleophile. C112 and C208 are disulfide-bonded. ATP is bound at residue G136. Residues 158 to 160 are interaction with tRNA; it reads KDQ. The Cysteine persulfide intermediate role is filled by C208. The interval 320–321 is interaction with tRNA; that stretch reads RY.

It belongs to the MnmA/TRMU family.

The protein localises to the cytoplasm. The enzyme catalyses S-sulfanyl-L-cysteinyl-[protein] + uridine(34) in tRNA + AH2 + ATP = 2-thiouridine(34) in tRNA + L-cysteinyl-[protein] + A + AMP + diphosphate + H(+). Catalyzes the 2-thiolation of uridine at the wobble position (U34) of tRNA, leading to the formation of s(2)U34. The sequence is that of tRNA-specific 2-thiouridylase MnmA from Chromohalobacter salexigens (strain ATCC BAA-138 / DSM 3043 / CIP 106854 / NCIMB 13768 / 1H11).